The sequence spans 504 residues: Sperm motility kinase 2A (504 aa).

One can recognise a Protein kinase domain in the interval 28–276 (YEMLGTIGHG…VAEVMMHPWV (249 aa)). ATP contacts are provided by residues 34-42 (IGHGGSTKV) and Lys57. The active-site Proton acceptor is Asp147. The UBA domain maps to 294 to 334 (KPDPAIVKAMGHIGFQAQDIEDSLRQRKFNETMASYCLLKK). Composition is skewed to polar residues over residues 376–393 (PTSL…CGRS) and 443–454 (SDESTEGHTSAS). Disordered stretches follow at residues 376–403 (PTSL…RSFS) and 443–469 (SDES…PRGI).

It belongs to the protein kinase superfamily. CAMK Ser/Thr protein kinase family. Smok subfamily. Testis-specific. Expressed in the testis from 22 days postpartum (22 dpp).

The enzyme catalyses L-seryl-[protein] + ATP = O-phospho-L-seryl-[protein] + ADP + H(+). It carries out the reaction L-threonyl-[protein] + ATP = O-phospho-L-threonyl-[protein] + ADP + H(+). May play a role in sperm motility, especially in the regulation of flagellar function. The chain is Sperm motility kinase 2A (Smok2a) from Mus musculus (Mouse).